The following is a 121-amino-acid chain: Snaclec coagulation factor IX-binding protein subunit A (121 aa).

The region spanning 1–120 (YEGHCYQTFK…CGERNPFVCE (120 aa)) is the C-type lectin domain. Disulfide bonds link C22/C119 and C94/C111. Ca(2+)-binding residues include S33, E35, and E39. E120 is a binding site for Ca(2+).

Belongs to the snaclec family. As to quaternary structure, heterodimer of subunits A and B; disulfide-linked. In terms of tissue distribution, expressed by the venom gland.

Its subcellular location is the secreted. In terms of biological role, anticoagulant protein which binds to the gamma-carboxyglutamic acid-domain regions of factor IX (F9) (but not factor X) in the presence of calcium with a 1 to 1 stoichiometry. In Gloydius halys (Chinese water mocassin), this protein is Snaclec coagulation factor IX-binding protein subunit A.